The following is a 94-amino-acid chain: Pyrimidine/purine nucleoside phosphorylase (94 aa).

It belongs to the nucleoside phosphorylase PpnP family.

It catalyses the reaction a purine D-ribonucleoside + phosphate = a purine nucleobase + alpha-D-ribose 1-phosphate. It carries out the reaction adenosine + phosphate = alpha-D-ribose 1-phosphate + adenine. The catalysed reaction is cytidine + phosphate = cytosine + alpha-D-ribose 1-phosphate. The enzyme catalyses guanosine + phosphate = alpha-D-ribose 1-phosphate + guanine. It catalyses the reaction inosine + phosphate = alpha-D-ribose 1-phosphate + hypoxanthine. It carries out the reaction thymidine + phosphate = 2-deoxy-alpha-D-ribose 1-phosphate + thymine. The catalysed reaction is uridine + phosphate = alpha-D-ribose 1-phosphate + uracil. The enzyme catalyses xanthosine + phosphate = alpha-D-ribose 1-phosphate + xanthine. Functionally, catalyzes the phosphorolysis of diverse nucleosides, yielding D-ribose 1-phosphate and the respective free bases. Can use uridine, adenosine, guanosine, cytidine, thymidine, inosine and xanthosine as substrates. Also catalyzes the reverse reactions. The sequence is that of Pyrimidine/purine nucleoside phosphorylase from Pseudomonas putida (strain W619).